The sequence spans 166 residues: Endoribonuclease YbeY (166 aa).

Zn(2+) contacts are provided by His111, His115, and His121. Residues 140 to 166 (ELGYPDPYADDESADPPHSDTPSKDHE) are disordered. A compositionally biased stretch (basic and acidic residues) spans 154 to 166 (DPPHSDTPSKDHE).

It belongs to the endoribonuclease YbeY family. Zn(2+) serves as cofactor.

It localises to the cytoplasm. Functionally, single strand-specific metallo-endoribonuclease involved in late-stage 70S ribosome quality control and in maturation of the 3' terminus of the 16S rRNA. This chain is Endoribonuclease YbeY, found in Pseudomonas syringae pv. syringae (strain B728a).